The primary structure comprises 246 residues: Exosome complex component Rrp41 (246 aa).

This sequence belongs to the RNase PH family. Rrp41 subfamily. In terms of assembly, component of the archaeal exosome complex. Forms a hexameric ring-like arrangement composed of 3 Rrp41-Rrp42 heterodimers. The hexameric ring associates with a trimer of Rrp4 and/or Csl4 subunits.

The protein resides in the cytoplasm. Functionally, catalytic component of the exosome, which is a complex involved in RNA degradation. Has 3'-&gt;5' exoribonuclease activity. Can also synthesize heteromeric RNA-tails. This is Exosome complex component Rrp41 from Aeropyrum pernix (strain ATCC 700893 / DSM 11879 / JCM 9820 / NBRC 100138 / K1).